The sequence spans 454 residues: tRNA(Ile)-lysidine synthase (454 aa).

27–32 is an ATP binding site; that stretch reads SGGSDS.

The protein belongs to the tRNA(Ile)-lysidine synthase family.

The protein resides in the cytoplasm. The enzyme catalyses cytidine(34) in tRNA(Ile2) + L-lysine + ATP = lysidine(34) in tRNA(Ile2) + AMP + diphosphate + H(+). Its function is as follows. Ligates lysine onto the cytidine present at position 34 of the AUA codon-specific tRNA(Ile) that contains the anticodon CAU, in an ATP-dependent manner. Cytidine is converted to lysidine, thus changing the amino acid specificity of the tRNA from methionine to isoleucine. This Mesorhizobium japonicum (strain LMG 29417 / CECT 9101 / MAFF 303099) (Mesorhizobium loti (strain MAFF 303099)) protein is tRNA(Ile)-lysidine synthase.